A 76-amino-acid polypeptide reads, in one-letter code: RNA-binding protein KhpA (76 aa).

The KH domain maps to 29-76 (QNIIELRVSPKDVGKVIGKNGRIAKSLRAILTAASVKAGKNFSLEIID).

The protein belongs to the KhpA RNA-binding protein family. As to quaternary structure, forms a complex with KhpB.

It localises to the cytoplasm. In terms of biological role, a probable RNA chaperone. Forms a complex with KhpB which binds to cellular RNA and controls its expression. Plays a role in peptidoglycan (PG) homeostasis and cell length regulation. This chain is RNA-binding protein KhpA, found in Leptospira interrogans serogroup Icterohaemorrhagiae serovar copenhageni (strain Fiocruz L1-130).